The chain runs to 679 residues: Patatin-like phospholipase 1 (679 aa).

Disordered stretches follow at residues 19–45 (FSDDEKDDSYEREKQVYSGSETQNAEN) and 155–194 (GEYEKRNTSSYDNTESVQNTVGSEKEETENKNEETSNYNS). Composition is skewed to polar residues over residues 35–45 (YSGSETQNAEN) and 162–176 (TSSYDNTESVQNTVG). Positions 177-188 (SEKEETENKNEE) are enriched in basic and acidic residues. The PNPLA domain occupies 338 to 544 (LSLDGGGILT…KASNPALIAL (207 aa)). The GXSXG signature appears at 381–385 (GTSAG). The active-site Nucleophile is the serine 383. Aspartate 531 acts as the Proton acceptor in catalysis. A DGA/G motif is present at residues 531–533 (DGA).

It belongs to the patatin family.

The protein resides in the cytoplasm. It catalyses the reaction a 1,2-diacyl-sn-glycero-3-phosphocholine + H2O = a 1-acyl-sn-glycero-3-phosphocholine + a fatty acid + H(+). The catalysed reaction is 1,2-dihexadecanoyl-sn-glycero-3-phosphocholine + H2O = 1-hexadecanoyl-sn-glycero-3-phosphocholine + hexadecanoate + H(+). Hydrolyzes the ester bond of the fatty acyl group attached at the sn-2 position of phospholipids such as phosphatidylcholine. Involved in gametogenesis; however, it is not clear whether it is involved in gametocytes development in host erythrocytes or in gametocyte activation in the mosquito midgut. Involved in gametocyte development in host erythrocytes; however, not involved in gametocytes activation including male gamete exflagellation. Involved in the rounding up of gametocytes following activation in the mosquito midgut; however, not required for gametocyte development in host erythrocytes. Required for exflagellation of activated male gametocytes. Involved in gametocytes egress from host erythrocytes by promoting the relocalization of perforin-like protein PLP2-containing vesicles to the periphery of gametocytes; PLP2 secretion is required for permeabilization of the erythrocyte membrane and thus, promotes gametocyte egress. Dispensable for asexual blood stage development. This is Patatin-like phospholipase 1 from Plasmodium falciparum (isolate NF54).